The chain runs to 876 residues: DNA mismatch repair protein MutS (876 aa).

Glycine 626–serine 633 is an ATP binding site.

This sequence belongs to the DNA mismatch repair MutS family.

This protein is involved in the repair of mismatches in DNA. It is possible that it carries out the mismatch recognition step. This protein has a weak ATPase activity. This is DNA mismatch repair protein MutS from Bordetella bronchiseptica (strain ATCC BAA-588 / NCTC 13252 / RB50) (Alcaligenes bronchisepticus).